The sequence spans 163 residues: Large ribosomal subunit protein uL10 (163 aa).

Belongs to the universal ribosomal protein uL10 family. Part of the ribosomal stalk of the 50S ribosomal subunit. The N-terminus interacts with L11 and the large rRNA to form the base of the stalk. The C-terminus forms an elongated spine to which L12 dimers bind in a sequential fashion forming a multimeric L10(L12)X complex.

In terms of biological role, forms part of the ribosomal stalk, playing a central role in the interaction of the ribosome with GTP-bound translation factors. This is Large ribosomal subunit protein uL10 from Mannheimia succiniciproducens (strain KCTC 0769BP / MBEL55E).